We begin with the raw amino-acid sequence, 127 residues long: Aspartate 1-decarboxylase (127 aa).

S25 (schiff-base intermediate with substrate; via pyruvic acid) is an active-site residue. The residue at position 25 (S25) is a Pyruvic acid (Ser). T57 is a substrate binding site. Y58 serves as the catalytic Proton donor. 73 to 75 (GAA) is a substrate binding site.

Belongs to the PanD family. As to quaternary structure, heterooctamer of four alpha and four beta subunits. It depends on pyruvate as a cofactor. Post-translationally, is synthesized initially as an inactive proenzyme, which is activated by self-cleavage at a specific serine bond to produce a beta-subunit with a hydroxyl group at its C-terminus and an alpha-subunit with a pyruvoyl group at its N-terminus.

It is found in the cytoplasm. It carries out the reaction L-aspartate + H(+) = beta-alanine + CO2. Its pathway is cofactor biosynthesis; (R)-pantothenate biosynthesis; beta-alanine from L-aspartate: step 1/1. Its function is as follows. Catalyzes the pyruvoyl-dependent decarboxylation of aspartate to produce beta-alanine. The sequence is that of Aspartate 1-decarboxylase from Listeria welshimeri serovar 6b (strain ATCC 35897 / DSM 20650 / CCUG 15529 / CIP 8149 / NCTC 11857 / SLCC 5334 / V8).